A 365-amino-acid chain; its full sequence is MSTSTLSDGSLDEGTFAAEDVSGVIEDYFFEGAEKLLEIWFDKNQNGATSLRNIPYSELVSMLDIAQCRILHSKSNECMDSYVLSESSMFISDFRIILKTCGTTRLLHAIERILHIAKIYCNMDNVVSVFYSRKNFMHPEKQPYPHSSFETEVDYLEEHFAGGSAYCIGPQRQDRWFLYTMVTPQAVFPFPEHTLEILMNGLPEDVLSTFSPNVSKDGKDCRMKSAINTILPPDIVVHEELFSPCGYSLNGLIPHSDHYITIHVTPEPDFSYVSFETNQHTLNLCEQMLKVLEIFKPSKFLLTIFTNELSNEGKKMQKNLWDLKICGCRRTNLQFLELPTETLIYVQFERIKSAEQVTCKEVFDR.

Catalysis depends on residues glutamate 31 and glutamate 34. Residue serine 87 is the Schiff-base intermediate with substrate; via pyruvic acid of the active site. Serine 87 carries the post-translational modification Pyruvic acid (Ser); by autocatalysis. The active-site Proton donor; for catalytic activity is cysteine 101. Active-site proton acceptor; for processing activity residues include serine 248 and histidine 263.

Belongs to the eukaryotic AdoMetDC family. Heterotetramer of two alpha and two beta chains. Pyruvate is required as a cofactor. Post-translationally, is synthesized initially as an inactive proenzyme. Formation of the active enzyme involves a self-maturation process in which the active site pyruvoyl group is generated from an internal serine residue via an autocatalytic post-translational modification. Two non-identical subunits are generated from the proenzyme in this reaction, and the pyruvate is formed at the N-terminus of the alpha chain, which is derived from the carboxyl end of the proenzyme. The post-translation cleavage follows an unusual pathway, termed non-hydrolytic serinolysis, in which the side chain hydroxyl group of the serine supplies its oxygen atom to form the C-terminus of the beta chain, while the remainder of the serine residue undergoes an oxidative deamination to produce ammonia and the pyruvoyl group blocking the N-terminus of the alpha chain.

It catalyses the reaction S-adenosyl-L-methionine + H(+) = S-adenosyl 3-(methylsulfanyl)propylamine + CO2. It participates in amine and polyamine biosynthesis; S-adenosylmethioninamine biosynthesis; S-adenosylmethioninamine from S-adenosyl-L-methionine: step 1/1. The protein is S-adenosylmethionine decarboxylase proenzyme (smd-1) of Onchocerca volvulus.